The sequence spans 306 residues: tRNA dimethylallyltransferase (306 aa).

Position 12–19 (12–19 (GPTASGKT)) interacts with ATP. 14–19 (TASGKT) is a binding site for substrate. 3 interaction with substrate tRNA regions span residues 37–40 (DSAL), 161–165 (QRLSR), and 242–247 (RCVGYR).

It belongs to the IPP transferase family. As to quaternary structure, monomer. Requires Mg(2+) as cofactor.

The catalysed reaction is adenosine(37) in tRNA + dimethylallyl diphosphate = N(6)-dimethylallyladenosine(37) in tRNA + diphosphate. Functionally, catalyzes the transfer of a dimethylallyl group onto the adenine at position 37 in tRNAs that read codons beginning with uridine, leading to the formation of N6-(dimethylallyl)adenosine (i(6)A). In Shewanella amazonensis (strain ATCC BAA-1098 / SB2B), this protein is tRNA dimethylallyltransferase.